The sequence spans 336 residues: Anthranilate phosphoribosyltransferase (336 aa).

Residues glycine 82, 85–86 (GD), threonine 90, 92–95 (NIST), 110–118 (KHGNRFASG), and serine 122 contribute to the 5-phospho-alpha-D-ribose 1-diphosphate site. An anthranilate-binding site is contributed by glycine 82. Serine 94 contacts Mg(2+). Asparagine 113 is a binding site for anthranilate. Arginine 168 contributes to the anthranilate binding site. 2 residues coordinate Mg(2+): aspartate 227 and glutamate 228.

Belongs to the anthranilate phosphoribosyltransferase family. In terms of assembly, homodimer. It depends on Mg(2+) as a cofactor.

The enzyme catalyses N-(5-phospho-beta-D-ribosyl)anthranilate + diphosphate = 5-phospho-alpha-D-ribose 1-diphosphate + anthranilate. It functions in the pathway amino-acid biosynthesis; L-tryptophan biosynthesis; L-tryptophan from chorismate: step 2/5. Catalyzes the transfer of the phosphoribosyl group of 5-phosphorylribose-1-pyrophosphate (PRPP) to anthranilate to yield N-(5'-phosphoribosyl)-anthranilate (PRA). In Desulfitobacterium hafniense (strain Y51), this protein is Anthranilate phosphoribosyltransferase.